A 609-amino-acid polypeptide reads, in one-letter code: Replication factor A protein 1 (609 aa).

Polar residues predominate over residues 130-152 (QNEQNNASAPRTGISTSTNSFYG). A disordered region spans residues 130–166 (QNEQNNASAPRTGISTSTNSFYGNNAAATAPAPPPMM). The OB DNA-binding region spans 192–278 (WTIRARVTNK…NEYELMFERD (87 aa)). The C4-type zinc finger occupies 477 to 498 (CPAADCNKKVFDQGGSWRCEKC).

This sequence belongs to the replication factor A protein 1 family. In terms of assembly, component of the heterotrimeric canonical replication protein A complex (RPA).

The protein resides in the nucleus. Its function is as follows. As part of the replication protein A (RPA/RP-A), a single-stranded DNA-binding heterotrimeric complex, may play an essential role in DNA replication, recombination and repair. Binds and stabilizes single-stranded DNA intermediates, preventing complementary DNA reannealing and recruiting different proteins involved in DNA metabolism. This Schizosaccharomyces pombe (strain 972 / ATCC 24843) (Fission yeast) protein is Replication factor A protein 1 (ssb1).